The following is a 243-amino-acid chain: Probable transcriptional regulatory protein LJ_0904 (243 aa).

The interval 1–22 (MSGHSKWHNIQGRKNAQDAKRG) is disordered.

This sequence belongs to the TACO1 family.

Its subcellular location is the cytoplasm. The polypeptide is Probable transcriptional regulatory protein LJ_0904 (Lactobacillus johnsonii (strain CNCM I-12250 / La1 / NCC 533)).